The primary structure comprises 243 residues: Pyridoxine 5'-phosphate synthase (243 aa).

Asn-9 is a binding site for 3-amino-2-oxopropyl phosphate. 11-12 provides a ligand contact to 1-deoxy-D-xylulose 5-phosphate; it reads DH. Arg-20 is a binding site for 3-amino-2-oxopropyl phosphate. The Proton acceptor role is filled by His-45. Arg-47 and His-52 together coordinate 1-deoxy-D-xylulose 5-phosphate. Residue Glu-72 is the Proton acceptor of the active site. Thr-102 lines the 1-deoxy-D-xylulose 5-phosphate pocket. His-193 acts as the Proton donor in catalysis. Residues Gly-194 and 215–216 each bind 3-amino-2-oxopropyl phosphate; that span reads GH.

It belongs to the PNP synthase family. Homooctamer; tetramer of dimers.

It is found in the cytoplasm. It carries out the reaction 3-amino-2-oxopropyl phosphate + 1-deoxy-D-xylulose 5-phosphate = pyridoxine 5'-phosphate + phosphate + 2 H2O + H(+). Its pathway is cofactor biosynthesis; pyridoxine 5'-phosphate biosynthesis; pyridoxine 5'-phosphate from D-erythrose 4-phosphate: step 5/5. Functionally, catalyzes the complicated ring closure reaction between the two acyclic compounds 1-deoxy-D-xylulose-5-phosphate (DXP) and 3-amino-2-oxopropyl phosphate (1-amino-acetone-3-phosphate or AAP) to form pyridoxine 5'-phosphate (PNP) and inorganic phosphate. This Vibrio parahaemolyticus serotype O3:K6 (strain RIMD 2210633) protein is Pyridoxine 5'-phosphate synthase.